A 392-amino-acid polypeptide reads, in one-letter code: Mycofactocin maturase MftC (392 aa).

In terms of domain architecture, Radical SAM core spans 18–228 (LDAPICLTWE…YDWLVAKGDR (211 aa)). Residues Cys32, Cys36, Cys39, Cys253, Cys260, Cys271, Cys312, Cys315, Cys321, Cys325, and Cys343 each contribute to the [4Fe-4S] cluster site. Over residues 354 to 367 (KERVKPKPSGDHSR) the composition is skewed to basic and acidic residues. The disordered stretch occupies residues 354–377 (KERVKPKPSGDHSRGTKQGPVALK).

It belongs to the radical SAM superfamily. MftC family. Requires [4Fe-4S] cluster as cofactor.

It carries out the reaction [mycofactocin precursor peptide]-C-terminal glycyl-L-valyl-L-tyrosine + S-adenosyl-L-methionine = [mycofactocin precursor peptide]-C-terminal glycyl-N-{[2-(4-hydroxyphenyl)ethenyl]-3-methylbutanamide} + 5'-deoxyadenosine + L-methionine + CO2. The enzyme catalyses [mycofactocin precursor peptide]-C-terminal glycyl-N-{[2-(4-hydroxyphenyl)ethenyl]-3-methylbutanamide} + AH2 + S-adenosyl-L-methionine = [mycofactocin precursor peptide]-C-terminal glycyl-N-{5-[(4-hydroxyphenyl)methyl]-4,4-dimethyl-2-oxopyrrolidin-3-yl}acetamide + 5'-deoxyadenosine + L-methionine + A + H(+). Its function is as follows. Radical S-adenosylmethionine (SAM) enzyme responsible for the first step of the biosynthesis of the enzyme cofactor mycofactocin (MFT). Catalyzes two reactions at the C-terminus of the mycofactocin precursor (the MftA peptide). The first one is the oxidative decarboxylation of the C-terminal L-tyrosine of MftA, forming an unsaturated tyramine moiety. The second reaction is the cross-linking of the tyramine with the penultimate L-valine residue, forming a five-membered lactam ring. Its activity requires the presence of the MftB chaperone. Is required for the in vivo ethanol assimilation in M.smegmatis. The sequence is that of Mycofactocin maturase MftC from Mycolicibacterium smegmatis (strain ATCC 700084 / mc(2)155) (Mycobacterium smegmatis).